A 541-amino-acid chain; its full sequence is Sorting nexin-27 (541 aa).

The tract at residues 1–26 is disordered; that stretch reads MADEDGEGIHPAAPHRNGGGGGGGGS. A compositionally biased stretch (gly residues) spans 17 to 26; sequence NGGGGGGGGS. A PDZ domain is found at 43–136; the sequence is VVRIVKSESG…ELILTVLSVP (94 aa). 2 positions are modified to phosphoserine: Ser51 and Ser62. Residues 161-269 form the PX domain; that stretch reads QAVPISVPTY…EFLSESDENY (109 aa). The 90-residue stretch at 273–362 folds into the Ras-associating domain; sequence SDVELRVALP…TCLTIRKWLF (90 aa). An FERM-like region F1 region spans residues 273–362; it reads SDVELRVALP…TCLTIRKWLF (90 aa). The interval 373–421 is FERM-like region F2; sequence NDLAVTYFFHQAVDDVKKGYIKAEEKSYQLQKLYEQRKMVMYLNMLRTC. The tract at residues 425 to 525 is FERM-like region F3; sequence NEIIFPHCAC…RVFCELKWRK (101 aa).

Core component of the SNX27-retromer, a multiprotein complex composed of SNX27, the WASH complex and the retromer complex. Interacts (via PDZ domain) with a number of target transmembrane proteins (via PDZ-binding motif): ABCC4, ADRB2, ARHGEF7, GRIA1, GRIA2, GRIN1, GRIN2A GRIN2C, KCNJ6, KCNJ9 and SLC2A1/GLUT1. Interacts (via the FERM-like regions) with the WASH complex. Interacts with SNX1. Interacts with CYTIP. Interacts with DGKZ. Interacts with MCC. Interacts (via PDZ domains) with SLC9A3; directs SLC9A3 membrane insertion from early endosomes to the plasma membrane.

It localises to the early endosome membrane. Its subcellular location is the cytoplasm. The protein localises to the cytosol. Functionally, involved in the retrograde transport from endosome to plasma membrane, a trafficking pathway that promotes the recycling of internalized transmembrane proteins. Following internalization, endocytosed transmembrane proteins are delivered to early endosomes and recycled to the plasma membrane instead of being degraded in lysosomes. SNX27 specifically binds and directs sorting of a subset of transmembrane proteins containing a PDZ-binding motif at the C-terminus: following interaction with target transmembrane proteins, associates with the retromer complex, preventing entry into the lysosomal pathway, and promotes retromer-tubule based plasma membrane recycling. SNX27 also binds with the WASH complex. Interacts with membranes containing phosphatidylinositol-3-phosphate (PtdIns(3P)). May participate in establishment of natural killer cell polarity. Recruits CYTIP to early endosomes. The sequence is that of Sorting nexin-27 (SNX27) from Bos taurus (Bovine).